We begin with the raw amino-acid sequence, 472 residues long: Bifunctional protein HldE (472 aa).

The interval 1–315 (MAKRVKILVV…QLLNSSFGAN (315 aa)) is ribokinase. 192–195 (NKKE) is an ATP binding site. Asp260 is an active-site residue. Residues 340-472 (FTNGCFDILH…IKDAKNDDKK (133 aa)) form a cytidylyltransferase region.

It in the N-terminal section; belongs to the carbohydrate kinase PfkB family. The protein in the C-terminal section; belongs to the cytidylyltransferase family. As to quaternary structure, homodimer.

It carries out the reaction D-glycero-beta-D-manno-heptose 7-phosphate + ATP = D-glycero-beta-D-manno-heptose 1,7-bisphosphate + ADP + H(+). The enzyme catalyses D-glycero-beta-D-manno-heptose 1-phosphate + ATP + H(+) = ADP-D-glycero-beta-D-manno-heptose + diphosphate. It participates in nucleotide-sugar biosynthesis; ADP-L-glycero-beta-D-manno-heptose biosynthesis; ADP-L-glycero-beta-D-manno-heptose from D-glycero-beta-D-manno-heptose 7-phosphate: step 1/4. Its pathway is nucleotide-sugar biosynthesis; ADP-L-glycero-beta-D-manno-heptose biosynthesis; ADP-L-glycero-beta-D-manno-heptose from D-glycero-beta-D-manno-heptose 7-phosphate: step 3/4. Functionally, catalyzes the phosphorylation of D-glycero-D-manno-heptose 7-phosphate at the C-1 position to selectively form D-glycero-beta-D-manno-heptose-1,7-bisphosphate. Catalyzes the ADP transfer from ATP to D-glycero-beta-D-manno-heptose 1-phosphate, yielding ADP-D-glycero-beta-D-manno-heptose. The sequence is that of Bifunctional protein HldE from Campylobacter concisus (strain 13826).